The chain runs to 543 residues: MDSQTVGILGGGQLGRMIVEAAHRLNIKTVILENGDQAPAKQINALDDHIDGSFNDPKAIAELAAKCDVLTVEIEHVDTDALVEVQKATGIKIFPSPETISLIKDKYLQKEHLIKNGIAVAESCSVESSAASLEEVGAKYGFPYMLKSRTMAYDGRGNFVVKDKSYIPEALKVLDDRPLYAEKWAPFSKELAVMVVRSIDGQVYSYPTVETIHQNNICHTVFAPARVNDTVQKKAQILADNAVKSFPGAGIFGVEMFLLQNGDLLVNEIAPRPHNSGHYTIDACVTSQFEAHVRAITGLPMPKNFTCLSTPSTQAIMLNVLGGDEQNGEFKMCKRALETPHASVYLYGKTTRPGRKMGHINIVSQSMTDCERRLHYIEGTTNSIPLEEQYTTDSIPGTSSKPLVGVIMGSDSDLPVMSLGCNILKQFNVPFEVTIVSAHRTPQRMAKYAIDAPKRGLKCIIAGAGGAAHLPGMVAAMTPLPVIGVPVKGSTLDGVDSLHSIVQMPRGIPVATVAINNATNAALLAITILGAGDPNTCLQWKFI.

One can recognise an ATP-grasp domain in the interval 110 to 297; the sequence is KEHLIKNGIA…QFEAHVRAIT (188 aa). 137-192 provides a ligand contact to ATP; the sequence is GAKYGFPYMLKSRTMAYDGRGNFVVKDKSYIPEALKVLDDRPLYAEKWAPFSKELA.

It in the C-terminal section; belongs to the AIR carboxylase family. Class I subfamily.

The catalysed reaction is 5-amino-1-(5-phospho-D-ribosyl)imidazole-4-carboxylate + H(+) = 5-amino-1-(5-phospho-beta-D-ribosyl)imidazole + CO2. It functions in the pathway purine metabolism; IMP biosynthesis via de novo pathway; 5-amino-1-(5-phospho-D-ribosyl)imidazole-4-carboxylate from 5-amino-1-(5-phospho-D-ribosyl)imidazole (carboxylase route): step 1/1. The sequence is that of Phosphoribosylaminoimidazole carboxylase (ADE1) from Ogataea methanolica (Yeast).